The following is a 412-amino-acid chain: Multifunctional CCA protein (412 aa).

ATP contacts are provided by Gly-8 and Arg-11. CTP is bound by residues Gly-8 and Arg-11. Positions 21 and 23 each coordinate Mg(2+). ATP is bound by residues Arg-91, Arg-137, and Arg-140. Residues Arg-91, Arg-137, and Arg-140 each contribute to the CTP site. An HD domain is found at 228-329; that stretch reads TGIHTLMTLA…LKLFNAIDVW (102 aa).

Belongs to the tRNA nucleotidyltransferase/poly(A) polymerase family. Bacterial CCA-adding enzyme type 1 subfamily. In terms of assembly, monomer. Can also form homodimers and oligomers. Mg(2+) is required as a cofactor. Requires Ni(2+) as cofactor.

The enzyme catalyses a tRNA precursor + 2 CTP + ATP = a tRNA with a 3' CCA end + 3 diphosphate. The catalysed reaction is a tRNA with a 3' CCA end + 2 CTP + ATP = a tRNA with a 3' CCACCA end + 3 diphosphate. Functionally, catalyzes the addition and repair of the essential 3'-terminal CCA sequence in tRNAs without using a nucleic acid template. Adds these three nucleotides in the order of C, C, and A to the tRNA nucleotide-73, using CTP and ATP as substrates and producing inorganic pyrophosphate. tRNA 3'-terminal CCA addition is required both for tRNA processing and repair. Also involved in tRNA surveillance by mediating tandem CCA addition to generate a CCACCA at the 3' terminus of unstable tRNAs. While stable tRNAs receive only 3'-terminal CCA, unstable tRNAs are marked with CCACCA and rapidly degraded. The polypeptide is Multifunctional CCA protein (Yersinia pestis).